Consider the following 1021-residue polypeptide: Inversin (1021 aa).

ANK repeat units follow at residues 7 to 36, 40 to 69, 73 to 102, 106 to 137, 141 to 170, 174 to 206, 213 to 243, 247 to 276, 281 to 310, 314 to 343, 349 to 378, 382 to 411, 415 to 444, 448 to 477, 481 to 510, and 516 to 546; these read QNPSQVHAAAVNGDKNTLHKLITESALRDS, FGRTPLMYCVLADRLDCAEVLLKAGAGINK, SQRTALHLAAQKGNVRFMKLLLSRHADWRL, EEMTPLHLASRHSSSKPLSLLLKHMAPGEVDT, NKQTALHWSAFYNHPEHVKLLIKHDSNIGI, EGKIPLHWAAHNKHPNATRTVRCILEAAPTESL, EGRTPLHFAVADGNEAVVEVLTSYEGCSVTA, LFRTPLHWAALLGHAKIVHLLLERNKSGMI, QGATPLHYGAQSNFADTVAVFLKHHSVRDE, EGRTAFMWAAGKGSNDVIKIMLDLKKDIDI, YGGTALHAAALSGHVSTVRLLLEQGGMVDP, MKHTPLFRACEMGHRDVILTLIKGGARVDL, DGHSALHWAALGGNAEVCEVLMENGISPNL, AGRTPLQCAAYAGYINCMALLIQHDADPNI, EGRTALHWSCNNGYLDAVKLLLGCGAFPNH, and ERYTPLDYALLGEHQELTQFLLEHGALSIAA. The D-box 1 signature appears at 483–491; sequence RTALHWSCN. Residues 548–577 form the IQ 1 domain; sequence QDIAASSIQALYKGYKVRRAFRERKKLLMR. Basic and acidic residues-rich tracts occupy residues 579–598 and 653–669; these read EQLRKDAAKKREEERRREAE and SRREKPSRAERRTREPE. Disordered stretches follow at residues 579–602, 632–691, and 704–868; these read EQLRKDAAKKREEERRREAEQQLS, KDSV…KKCP, and GPDT…GTCS. The span at 722–731 shows a compositional bias: low complexity; the sequence is PAGSSRPGSA. Polar residues-rich tracts occupy residues 759–781 and 791–802; these read GAHSKNASQDTPQHNETQTTSKG and TGSQPSNNTSVT. A compositionally biased stretch (basic and acidic residues) spans 803–866; that stretch reads RQKEKRQEKE…KEKEKKKDGT (64 aa). Positions 862–870 match the D-box 2 motif; sequence KKDGTCSKN. The 30-residue stretch at 869–898 folds into the IQ 2 domain; the sequence is KNQAAVVIQRAWRRSCVRGRIRKVLCRSLK.

As to quaternary structure, binds calmodulin via its IQ domains.

It is found in the cytoplasm. The protein localises to the cytoskeleton. Required for normal renal development and establishment of left-right axis. Probably acts as a molecular switch between different Wnt signaling pathways. Inhibits the canonical Wnt pathway by targeting cytoplasmic disheveled for degradation by the ubiquitin-proteasome. This suggests that it is required in renal development to oppose the repression of terminal differentiation of tubular epithelial cells by Wnt signaling. This chain is Inversin (invs), found in Danio rerio (Zebrafish).